A 209-amino-acid polypeptide reads, in one-letter code: Small ribosomal subunit protein uS4 (209 aa).

Residues 98–161 enclose the S4 RNA-binding domain; that stretch reads TRLDNVVYRM…AKQLRVQEAL (64 aa).

It belongs to the universal ribosomal protein uS4 family. As to quaternary structure, part of the 30S ribosomal subunit. Contacts protein S5. The interaction surface between S4 and S5 is involved in control of translational fidelity.

Functionally, one of the primary rRNA binding proteins, it binds directly to 16S rRNA where it nucleates assembly of the body of the 30S subunit. In terms of biological role, with S5 and S12 plays an important role in translational accuracy. The sequence is that of Small ribosomal subunit protein uS4 from Stenotrophomonas maltophilia (strain R551-3).